A 232-amino-acid chain; its full sequence is EEF1A lysine methyltransferase 3 (232 aa).

Residues W57, 83-85 (GAG), D104, W133, and A150 contribute to the S-adenosyl-L-methionine site.

This sequence belongs to the methyltransferase superfamily. METTL21 family. As to quaternary structure, interacts with members of the heat shock protein 70 and 90 families and of the TCP-1 chaperonin family, as well as with HSPD1, STIP1 and tubulin; at least some of these proteins may be methylation substrates.

It localises to the cytoplasm. The protein resides in the cytoskeleton. Its subcellular location is the microtubule organizing center. The protein localises to the centrosome. It carries out the reaction L-lysyl-[protein] + 3 S-adenosyl-L-methionine = N(6),N(6),N(6)-trimethyl-L-lysyl-[protein] + 3 S-adenosyl-L-homocysteine + 3 H(+). It catalyses the reaction L-lysyl-[protein] + S-adenosyl-L-methionine = N(6)-methyl-L-lysyl-[protein] + S-adenosyl-L-homocysteine + H(+). The catalysed reaction is N(6)-methyl-L-lysyl-[protein] + S-adenosyl-L-methionine = N(6),N(6)-dimethyl-L-lysyl-[protein] + S-adenosyl-L-homocysteine + H(+). The enzyme catalyses N(6),N(6)-dimethyl-L-lysyl-[protein] + S-adenosyl-L-methionine = N(6),N(6),N(6)-trimethyl-L-lysyl-[protein] + S-adenosyl-L-homocysteine + H(+). In terms of biological role, protein-lysine methyltransferase that selectively mono-, di- and trimethylates 'Lys-165' of the translation elongation factors EEF1A1 and EEF1A2 in an aminoacyl-tRNA and GTP-dependent manner. EEF1A1 methylation by EEF1AKMT3 is dynamic as well as inducible by stress conditions, such as ER-stress, and plays a regulatory role on mRNA translation. The chain is EEF1A lysine methyltransferase 3 from Mus musculus (Mouse).